The sequence spans 540 residues: MAAKDVKFGNDARVKMLRGVNVLADAVKVTLGPKGRNVVLDKSFGAPTITKDGVSVAREIELEDKFENMGAQMVKEVASKANDAAGDGTTTATVLAQSIITEGLKAVAAGMNPMDLKRGIDKAVVAAVEELKKLSVPCSDSKAIAQVGTISANSDETVGKLIAEAMEKVGKEGVITVEEGTGLQDELDVVEGMQFDRGYLSPYFINKPETGSVELESPFILLADKKISNIREMLPVLEAVAKAGKPLLIIAEDVEGEALATLVVNTMRGIVKVAAVKAPGFGDRRKDMLQDIATLTAGTVISEEIGLELEKATLEDLGQAKRVVINKDTTIIIDGVGDEATIQGRVAQIRQQIEEATSDYDREKLQERVAKLAGGVAVIKVGAATEVEMKEKKARVEDALHATRAAVEEGVVAGGGVALIRVAGKIAALKGDNEDQNVGIKVALRAMEAPLRQIVVNAGEEASVIANQVKAGEGSYGYNAYSEEYGDMIAMGILDPTKVTRSALQYAASVAGLMITTECMVTDLPKADAPDLGAXGGMGG.

Residues 30-33 (TLGP), K51, 87-91 (DGTTT), G415, and D495 each bind ATP.

The protein belongs to the chaperonin (HSP60) family. Forms a cylinder of 14 subunits composed of two heptameric rings stacked back-to-back. Interacts with the co-chaperonin GroES.

It is found in the cytoplasm. The catalysed reaction is ATP + H2O + a folded polypeptide = ADP + phosphate + an unfolded polypeptide.. In terms of biological role, together with its co-chaperonin GroES, plays an essential role in assisting protein folding. The GroEL-GroES system forms a nano-cage that allows encapsulation of the non-native substrate proteins and provides a physical environment optimized to promote and accelerate protein folding. The sequence is that of Chaperonin GroEL from Serratia marcescens.